The primary structure comprises 419 residues: AT-rich binding protein (419 aa).

A C2H2-type 1 zinc finger spans residues 29 to 52 (IVCHTCQEELQTQDAFWKHIQDEH). The disordered stretch occupies residues 121-179 (LHEAQHQQQQQQQQHQQQQQQQQHQQQQQHQHHQHQQQQQHLHQQQQQQQQQQRDAAKE). 2 stretches are compositionally biased toward low complexity: residues 126 to 149 (HQQQ…QQQQ) and 156 to 173 (QQQQ…QQQQ). C2H2-type zinc fingers lie at residues 352-376 (YVCD…RVVH) and 382-405 (FNCD…KKKH).

It localises to the nucleus. In terms of biological role, may be a transcription factor for genes having (A+T) stretches in their promoter and/or enhancer regions. Binds to AT rich DNA. In Drosophila grimshawi (Hawaiian fruit fly), this protein is AT-rich binding protein.